Here is an 882-residue protein sequence, read N- to C-terminus: Valine--tRNA ligase (882 aa).

The short motif at 45 to 55 is the 'HIGH' region element; that stretch reads PNVTGKLHLGH. A 'KMSKS' region motif is present at residues 519–523; the sequence is KMSKS. K522 contributes to the ATP binding site. Residues 808–877 adopt a coiled-coil conformation; it reads LADLLNVEEE…DATQERIVEM (70 aa).

This sequence belongs to the class-I aminoacyl-tRNA synthetase family. ValS type 1 subfamily. As to quaternary structure, monomer.

The protein localises to the cytoplasm. It carries out the reaction tRNA(Val) + L-valine + ATP = L-valyl-tRNA(Val) + AMP + diphosphate. Catalyzes the attachment of valine to tRNA(Val). As ValRS can inadvertently accommodate and process structurally similar amino acids such as threonine, to avoid such errors, it has a 'posttransfer' editing activity that hydrolyzes mischarged Thr-tRNA(Val) in a tRNA-dependent manner. The protein is Valine--tRNA ligase of Streptococcus pyogenes serotype M6 (strain ATCC BAA-946 / MGAS10394).